Consider the following 345-residue polypeptide: Anthranilate phosphoribosyltransferase (345 aa).

5-phospho-alpha-D-ribose 1-diphosphate-binding positions include Gly-84, 87-88 (GD), Thr-92, 94-97 (NVTT), 112-120 (KHGNRSVSS), and Ser-124. Gly-84 is an anthranilate binding site. Thr-96 lines the Mg(2+) pocket. Asn-115 contributes to the anthranilate binding site. Arg-170 serves as a coordination point for anthranilate. Mg(2+)-binding residues include Asp-228 and Glu-229.

It belongs to the anthranilate phosphoribosyltransferase family. As to quaternary structure, homodimer. Requires Mg(2+) as cofactor.

The catalysed reaction is N-(5-phospho-beta-D-ribosyl)anthranilate + diphosphate = 5-phospho-alpha-D-ribose 1-diphosphate + anthranilate. Its pathway is amino-acid biosynthesis; L-tryptophan biosynthesis; L-tryptophan from chorismate: step 2/5. Catalyzes the transfer of the phosphoribosyl group of 5-phosphorylribose-1-pyrophosphate (PRPP) to anthranilate to yield N-(5'-phosphoribosyl)-anthranilate (PRA). In Corynebacterium aurimucosum (strain ATCC 700975 / DSM 44827 / CIP 107346 / CN-1) (Corynebacterium nigricans), this protein is Anthranilate phosphoribosyltransferase.